We begin with the raw amino-acid sequence, 221 residues long: PKHD-type hydroxylase P9515_13321 (221 aa).

Positions 80 to 174 constitute a Fe2OG dioxygenase domain; that stretch reads TIHGIMFTKS…RLVCVGWIES (95 aa). The Fe cation site is built by H98, D100, and H155. Position 165 (R165) interacts with 2-oxoglutarate.

Fe(2+) serves as cofactor. It depends on L-ascorbate as a cofactor.

This chain is PKHD-type hydroxylase P9515_13321, found in Prochlorococcus marinus (strain MIT 9515).